The sequence spans 779 residues: Abnormal cell migration protein 10 (779 aa).

A compositionally biased stretch (acidic residues) spans 78–97; the sequence is NELEADTEEDIAETADDEES. Disordered stretches follow at residues 78–105, 189–217, and 242–302; these read NELE…EKTE, SSSR…PQQP, and AASS…NAEE. The span at 189–200 shows a compositional bias: polar residues; that stretch reads SSSRENVKSIST. Residues 242–254 show a composition bias toward low complexity; it reads AASSCSSPDGDSA. The segment covering 256–293 has biased composition (polar residues); that stretch reads GDSSSTESSNNRCRNSAFSSNDSCRDSLNTPSPTQVSP. Residues 317–407 enclose the Ras-associating domain; sequence EAKVTKIFVK…NKLYFMRRPD (91 aa). The 111-residue stretch at 456 to 566 folds into the PH domain; that stretch reads PPEMEGFLYL…WLVALRIAKN (111 aa). Composition is skewed to polar residues over residues 645–660 and 688–698; these read SFSV…SRTS and RASTSSPTIPQ. A disordered region spans residues 645–763; it reads SFSVNSCQQS…SPMAPAKNDL (119 aa). The segment covering 708-729 has biased composition (pro residues); the sequence is PAPPPVASVMRMPPPVTPPKPC.

The protein belongs to the MRL family. In terms of assembly, may interact (via Ras-associating and PH domains) with ced-10 (GTP-bound form).

It is found in the perikaryon. Its function is as follows. Required cell non-autonomously for proper development of the excretory canals and for the long-range anterior-posterior migrations of embryonic neurons CAN, ALM and HSN. Plays a role, probably downstream of ced-10/rac1, in orientating axonal growth of HSN and AVM neurons in response to guidance cues such as slt-1. May regulate growth cone polarization by promoting asymmetric F-actin assembly. May be involved in signal transduction during cell migration. In Caenorhabditis elegans, this protein is Abnormal cell migration protein 10.